Here is a 265-residue protein sequence, read N- to C-terminus: Glutamate racemase 2 (265 aa).

Substrate-binding positions include 7 to 8 and 39 to 40; these read DS and YG. Cys-70 functions as the Proton donor/acceptor in the catalytic mechanism. Substrate is bound at residue 71-72; that stretch reads NT. Cys-182 serves as the catalytic Proton donor/acceptor. 183–184 is a substrate binding site; that stretch reads TH.

This sequence belongs to the aspartate/glutamate racemases family.

It catalyses the reaction L-glutamate = D-glutamate. It participates in cell wall biogenesis; peptidoglycan biosynthesis. In terms of biological role, provides the (R)-glutamate required for cell wall biosynthesis. The chain is Glutamate racemase 2 (yrpC) from Bacillus subtilis (strain 168).